A 561-amino-acid polypeptide reads, in one-letter code: Putative transport protein YbjL (561 aa).

Helical transmembrane passes span 8 to 28 (LLNG…LCLG), 32 to 52 (LGSV…LLGQ), 66 to 86 (FMLF…SIFF), 94 to 114 (MLAL…GKLF), and 158 to 178 (NLSL…IVGA). RCK C-terminal domains follow at residues 200 to 288 (RGLD…SFRN) and 292 to 373 (VFDR…RIGF). A run of 5 helical transmembrane segments spans residues 383 to 403 (LLAF…TFQF), 406 to 426 (FSFG…LGFL), 447 to 467 (FGLM…ISNG), 475 to 495 (MLIA…LFGA), and 540 to 560 (AIAN…WPGL).

It belongs to the AAE transporter (TC 2.A.81) family. YbjL subfamily.

The protein localises to the cell membrane. The protein is Putative transport protein YbjL of Salmonella dublin (strain CT_02021853).